The chain runs to 301 residues: MDNVANNDVDVLEKQAAFLSSALPYMQKYENETVVIKYGGHAMGNLALGQAFARDIALLKQSGVNPIVVHGGGPRIAETLKKMGIESRFESGLRVTDEKIVEVVEMVLAGSINKEIVALINAEGEWAIGLCGKDGNMVFAEKVHKTVIDPNSNSERVLDLGFVGEPVEIDRTLLDFLACSEMIPVIAPIAPGRDGKTYNINADIFAGAIAGALEAKRLLFLTDVPGVLDKEGKVLKELTVTEAKNLIKDGTISGGMIPKVETCINAIQGGVEGVVILNGKTSHPVLLELFTEHGAGTLIIS.

Substrate-binding positions include 72-73 (GG), Arg94, and Asn199.

This sequence belongs to the acetylglutamate kinase family. ArgB subfamily.

It localises to the cytoplasm. The enzyme catalyses N-acetyl-L-glutamate + ATP = N-acetyl-L-glutamyl 5-phosphate + ADP. The protein operates within amino-acid biosynthesis; L-arginine biosynthesis; N(2)-acetyl-L-ornithine from L-glutamate: step 2/4. Catalyzes the ATP-dependent phosphorylation of N-acetyl-L-glutamate. The chain is Acetylglutamate kinase from Bartonella bacilliformis (strain ATCC 35685 / KC583 / Herrer 020/F12,63).